Consider the following 114-residue polypeptide: Gonadotropin subunit beta-1 (114 aa).

Positions 1-19 are cleaved as a signal peptide; it reads MQLVLMAAVLALAEVGCFG. 6 cysteine pairs are disulfide-bonded: C20/C66, C32/C80, C37/C114, C43/C92, C47/C94, and C97/C104. An N-linked (GlcNAc...) asparagine glycan is attached at N24.

It belongs to the glycoprotein hormones subunit beta family. As to quaternary structure, heterodimer of an alpha and a beta chain.

The protein localises to the secreted. Its function is as follows. Involved in gametogenesis and steroidogenesis. The polypeptide is Gonadotropin subunit beta-1 (cgba) (Fundulus heteroclitus (Killifish)).